A 361-amino-acid chain; its full sequence is Phosphoserine aminotransferase (361 aa).

Position 42 (Arg42) interacts with L-glutamate. Residues 76–77 (AT), Trp102, Thr152, Asp172, and Gln195 contribute to the pyridoxal 5'-phosphate site. An N6-(pyridoxal phosphate)lysine modification is found at Lys196. 237-238 (NT) is a binding site for pyridoxal 5'-phosphate.

The protein belongs to the class-V pyridoxal-phosphate-dependent aminotransferase family. SerC subfamily. In terms of assembly, homodimer. Pyridoxal 5'-phosphate is required as a cofactor.

The protein resides in the cytoplasm. The enzyme catalyses O-phospho-L-serine + 2-oxoglutarate = 3-phosphooxypyruvate + L-glutamate. The catalysed reaction is 4-(phosphooxy)-L-threonine + 2-oxoglutarate = (R)-3-hydroxy-2-oxo-4-phosphooxybutanoate + L-glutamate. The protein operates within amino-acid biosynthesis; L-serine biosynthesis; L-serine from 3-phospho-D-glycerate: step 2/3. It functions in the pathway cofactor biosynthesis; pyridoxine 5'-phosphate biosynthesis; pyridoxine 5'-phosphate from D-erythrose 4-phosphate: step 3/5. In terms of biological role, catalyzes the reversible conversion of 3-phosphohydroxypyruvate to phosphoserine and of 3-hydroxy-2-oxo-4-phosphonooxybutanoate to phosphohydroxythreonine. The polypeptide is Phosphoserine aminotransferase (Xanthomonas campestris pv. campestris (strain 8004)).